The sequence spans 256 residues: Floral homeotic protein APETALA 1 (256 aa).

In terms of domain architecture, MADS-box spans 1–61 (MGRGRVQLKR…GKLFEYSTDP (61 aa)). The K-box domain maps to 88 to 178 (NTNWSMEYNR…SKQIKERENV (91 aa)). Positions 187 to 206 (DEQNHGHNMPPPPPPQQHQI) are disordered.

Homodimer capable of binding to CArG-box sequences.

The protein resides in the nucleus. Its function is as follows. Transcription factor that promotes early floral meristem identity in synergy with LEAFY. Displays a redundant function with CAULIFLOWER in the up-regulation of LEAFY. Required subsequently for the transition of an inflorescence meristem into a floral meristem, and for the normal development of sepals and petals in flowers. Regulates positively B class homeotic proteins. This Brassica oleracea (Wild cabbage) protein is Floral homeotic protein APETALA 1 (AP1).